Here is a 394-residue protein sequence, read N- to C-terminus: MSLLDTLQRGLADLDAQGLRRVRRIADTACDARMTVNGREIVGFASNDYLGLAAHPALVAAFAEGAQRYGSGSGGSHLLGGHSRAHARLEDELAGFAGGFSDAPRALYFSTGYMANLAAMTALAGKGATIFSDALNHASLIDGMRLSRANVQVYPHADTAALAALLDASEAETKLIVSDTVFSMDGDVAPLAELVALAERHGAWLVVDDAHGFGVLGPQGRGALAAAALRSPHLVYVGTLGKAAGVAGAFVIAHETVIEWLIQRARSYIFTTAAPPAVAHAVSASLKVIAGDEGDARRAHLAALIERTRALLRNTRWQPVDSHTAVQPLVIGSNDATLAAMRALDAHGLWVPAIRPPTVPAGTSRLRVSLSAAHSFDDFARLEAALIEASEAAA.

Arg21 contributes to the substrate binding site. 112–113 lines the pyridoxal 5'-phosphate pocket; that stretch reads GY. His137 serves as a coordination point for substrate. Positions 183, 211, and 239 each coordinate pyridoxal 5'-phosphate. Lys242 is modified (N6-(pyridoxal phosphate)lysine). Thr358 is a substrate binding site.

This sequence belongs to the class-II pyridoxal-phosphate-dependent aminotransferase family. BioF subfamily. As to quaternary structure, homodimer. Pyridoxal 5'-phosphate serves as cofactor.

The enzyme catalyses 6-carboxyhexanoyl-[ACP] + L-alanine + H(+) = (8S)-8-amino-7-oxononanoate + holo-[ACP] + CO2. Its pathway is cofactor biosynthesis; biotin biosynthesis. In terms of biological role, catalyzes the decarboxylative condensation of pimeloyl-[acyl-carrier protein] and L-alanine to produce 8-amino-7-oxononanoate (AON), [acyl-carrier protein], and carbon dioxide. In Burkholderia cenocepacia (strain ATCC BAA-245 / DSM 16553 / LMG 16656 / NCTC 13227 / J2315 / CF5610) (Burkholderia cepacia (strain J2315)), this protein is 8-amino-7-oxononanoate synthase.